The chain runs to 570 residues: Urease subunit alpha (570 aa).

The Urease domain occupies 131–570; the sequence is GGFDSHIHFI…LPLAQRYFMF (440 aa). The Ni(2+) site is built by His-136, His-138, and Lys-219. At Lys-219 the chain carries N6-carboxylysine. His-221 is a substrate binding site. Residues His-248 and His-274 each contribute to the Ni(2+) site. His-322 functions as the Proton donor in the catalytic mechanism. Asp-362 is a binding site for Ni(2+).

Belongs to the metallo-dependent hydrolases superfamily. Urease alpha subunit family. As to quaternary structure, heterotrimer of UreA (gamma), UreB (beta) and UreC (alpha) subunits. Three heterotrimers associate to form the active enzyme. The cofactor is Ni cation. Carboxylation allows a single lysine to coordinate two nickel ions.

The protein resides in the cytoplasm. The enzyme catalyses urea + 2 H2O + H(+) = hydrogencarbonate + 2 NH4(+). The protein operates within nitrogen metabolism; urea degradation; CO(2) and NH(3) from urea (urease route): step 1/1. This chain is Urease subunit alpha, found in Rhodopseudomonas palustris (strain ATCC BAA-98 / CGA009).